Here is a 422-residue protein sequence, read N- to C-terminus: Enolase (422 aa).

Residue Gln162 coordinates (2R)-2-phosphoglycerate. The active-site Proton donor is Glu204. Asp241, Glu284, and Asp311 together coordinate Mg(2+). Positions 336, 365, 366, and 387 each coordinate (2R)-2-phosphoglycerate. The active-site Proton acceptor is Lys336.

It belongs to the enolase family. Component of the RNA degradosome, a multiprotein complex involved in RNA processing and mRNA degradation. Mg(2+) serves as cofactor.

The protein localises to the cytoplasm. Its subcellular location is the secreted. The protein resides in the cell surface. The catalysed reaction is (2R)-2-phosphoglycerate = phosphoenolpyruvate + H2O. Its pathway is carbohydrate degradation; glycolysis; pyruvate from D-glyceraldehyde 3-phosphate: step 4/5. Its function is as follows. Catalyzes the reversible conversion of 2-phosphoglycerate (2-PG) into phosphoenolpyruvate (PEP). It is essential for the degradation of carbohydrates via glycolysis. The protein is Enolase of Legionella pneumophila (strain Paris).